The primary structure comprises 390 residues: Pyruvate dehydrogenase E1 component subunit alpha, somatic form, mitochondrial (390 aa).

The N-terminal 29 residues, 1-29, are a transit peptide targeting the mitochondrion; it reads MRKMLAAVSRVLSGASQKPASRVLVASRN. Residue K63 is modified to N6-acetyllysine; alternate. N6-succinyllysine; alternate is present on K63. Residues H92, Y118, R119, A157, G165, V167, D196, G197, A198, N225, and Y227 each contribute to the pyruvate site. 2 residues coordinate thiamine diphosphate: Y118 and R119. The thiamine diphosphate site is built by G165, V167, D196, G197, A198, and N225. D196 provides a ligand contact to Mg(2+). Positions 225 and 227 each coordinate Mg(2+). S232 is modified (phosphoserine; by PDK1). Position 244 is an N6-acetyllysine; alternate (K244). Residue K244 is modified to N6-succinyllysine; alternate. An N6-succinyllysine modification is found at K277. H292 contacts thiamine diphosphate. A Phosphoserine; by PDK1, PDK2, PDK3 and PDK4 modification is found at S293. Residue S295 is modified to Phosphoserine. At S300 the chain carries Phosphoserine; by PDK1, PDK2, PDK3 and PDK4. Y301 is subject to Phosphotyrosine. K313 carries the N6-acetyllysine; alternate modification. The residue at position 313 (K313) is an N6-succinyllysine; alternate. N6-acetyllysine occurs at positions 321 and 336. The residue at position 385 (K385) is an N6-succinyllysine.

In terms of assembly, heterotetramer of two PDHA1 and two PDHB subunits. The heterotetramer interacts with DLAT, and is part of the multimeric pyruvate dehydrogenase complex that contains multiple copies of pyruvate dehydrogenase (E1), dihydrolipoamide acetyltransferase (DLAT, E2) and lipoamide dehydrogenase (DLD, E3). These subunits are bound to an inner core composed of about 48 DLAT and 12 PDHX molecules. Thiamine diphosphate serves as cofactor. Requires Mg(2+) as cofactor. Phosphorylation at Ser-232, Ser-293 and Ser-300 by PDK family kinases inactivates the enzyme; for this phosphorylation at a single site is sufficient. Dephosphorylation at all three sites, i.e. at Ser-232, Ser-293 and Ser-300, is required for reactivation. Post-translationally, acetylation alters the phosphorylation pattern. Deacetylated by SIRT3. In terms of tissue distribution, ubiquitous.

The protein localises to the mitochondrion matrix. The enzyme catalyses N(6)-[(R)-lipoyl]-L-lysyl-[protein] + pyruvate + H(+) = N(6)-[(R)-S(8)-acetyldihydrolipoyl]-L-lysyl-[protein] + CO2. Its activity is regulated as follows. Pyruvate dehydrogenase activity is inhibited by phosphorylation of PDHA1; it is reactivated by dephosphorylation. Functionally, the pyruvate dehydrogenase complex catalyzes the overall conversion of pyruvate to acetyl-CoA and CO(2), and thereby links the glycolytic pathway to the tricarboxylic cycle. The protein is Pyruvate dehydrogenase E1 component subunit alpha, somatic form, mitochondrial (PDHA1) of Homo sapiens (Human).